Here is a 377-residue protein sequence, read N- to C-terminus: Deoxyribonuclease CdiA-o11 (377 aa).

Residues 81–84 (VENN) carry the VENN CT cleavage motif motif. The interval 85 to 233 (YLSTNQSLTF…ISFMSRNTAT (149 aa)) is inner membrane translocation domain (IMTD), targets to YciB. The interval 88 to 377 (TNQSLTFDKE…GVKVTVTQVK (290 aa)) is CT domain, sufficient to interact with CdiI. A has DNase activity in vivo, cannot be expressed in the absence of CdiI region spans residues 222-377 (AAISFMSRNT…GVKVTVTQVK (156 aa)). Active-site residues include glutamate 257, aspartate 278, serine 289, and lysine 291. Residues glutamate 257 and aspartate 278 each coordinate Zn(2+).

Interacts with cognate immunity protein CdiI-o11-EC869, which blocks its toxic DNase activity. Zn(2+) serves as cofactor.

It localises to the target cell. The protein resides in the target cell cytoplasm. Functionally, toxic component of a toxin-immunity protein module, which functions as a cellular contact-dependent growth inhibition (CDI) system. CDI modules allow bacteria to communicate with and inhibit the growth of closely related neighboring bacteria in a contact-dependent fashion. The C-terminal 289 residues (the CT fragment) has a strong DNase activity in the presence of Zn(2+), completely degrading supercoiled and linear plasmids, and inhibits growth. In the presence of Mg(2+) it nicks dsDNA. Toxic activity is neutralized by coexpression of the cognate immunity protein CdiI-o11-EC869, but not by non-cognate immunity proteins from other toxin-immunity modules or other strains of E.coli. Gains access to the cytoplasm of target cells by using integral inner membrane protein YciB. Expression of this locus confers protection against other bacteria carrying the locus. The protein is Deoxyribonuclease CdiA-o11 (cdiA4) of Escherichia coli O157:H7 (strain EC869).